Consider the following 357-residue polypeptide: MAEFVRAQIFGTTFEITSRYSDLQPVGMGAFGLVCSARDQLTNQNVAVKKIMKPFSTPVLAKRTYRELKLLKHLKHENVISLSDIFISPLEDIYFVTELLGTDLHRLLTSRPLEKQFIQYFLYQIMRGLKYVHSAGVVHRDLKPSNILVNENCDLKICDFGLARIQDPQMTGYVSTRYYRAPEIMLTWQKYDVEVDIWSAGCIFAEMLEGKPLFPGKDHVNQFSIITELLGTPPDDVINTIASENTLRFVKSLPKRERQPLRNKFKNADDSAIDLLERMLVFDPKKRITATEALAHDYLSPYHDPTDEPVAEEKFDWSFNDADLPVDTWKIMMYSEILDYHNVEAGVTNMEEQFNGQ.

Residues 20-299 (YSDLQPVGMG…ATEALAHDYL (280 aa)) form the Protein kinase domain. Residues 26 to 34 (VGMGAFGLV) and Lys49 each bind ATP. The active-site Proton acceptor is the Asp141. At Thr171 the chain carries Phosphothreonine. A TXY motif is present at residues 171–173 (TGY). At Tyr173 the chain carries Phosphotyrosine.

This sequence belongs to the protein kinase superfamily. Ser/Thr protein kinase family. MAP kinase subfamily. HOG1 sub-subfamily. Requires Mg(2+) as cofactor. Post-translationally, dually phosphorylated on Thr-171 and Tyr-173, which activates the enzyme.

The protein resides in the cytoplasm. Its subcellular location is the nucleus. The catalysed reaction is L-seryl-[protein] + ATP = O-phospho-L-seryl-[protein] + ADP + H(+). It catalyses the reaction L-threonyl-[protein] + ATP = O-phospho-L-threonyl-[protein] + ADP + H(+). Activated by tyrosine and threonine phosphorylation. Proline-directed serine/threonine-protein kinase involved in a signal transduction pathway that is activated by changes in the osmolarity of the extracellular environment. Controls osmotic regulation of transcription of target genes. The polypeptide is Mitogen-activated protein kinase HOG1 (HOG1) (Gibberella zeae (strain ATCC MYA-4620 / CBS 123657 / FGSC 9075 / NRRL 31084 / PH-1) (Wheat head blight fungus)).